The sequence spans 218 residues: DNA-directed RNA polymerase III subunit RPC7-like (218 aa).

Residues L133 to Y218 form a disordered region. Residues K139–E160 are compositionally biased toward basic and acidic residues. Composition is skewed to acidic residues over residues V161 to D193 and N201 to Y218.

It belongs to the eukaryotic RPC7 RNA polymerase subunit family. In terms of assembly, component of the RNA polymerase III (Pol III) complex consisting of 17 subunits. Pol III exists as two alternative complexes defined by the mutually exclusive incorporation of subunit POLR3G/RPC7alpha or POLR3GL/RPC7beta. Found in a trimeric complex with POLR3C/RPC3 and POLR3F/RPC6. Directly interacts with POLR3C. Widely expressed. Expressed in CD4-positive T cells.

It localises to the nucleus. Functionally, DNA-dependent RNA polymerase catalyzes the transcription of DNA into RNA using the four ribonucleoside triphosphates as substrates. Specific peripheric component of RNA polymerase III which synthesizes small RNAs, such as 5S rRNA and tRNAs. This Homo sapiens (Human) protein is DNA-directed RNA polymerase III subunit RPC7-like.